A 611-amino-acid chain; its full sequence is Growth hormone receptor (611 aa).

The first 20 residues, 1–20, serve as a signal peptide directing secretion; it reads MDLRHLLLTLVLVCANDSLS. A glycan (N-linked (GlcNAc...) asparagine) is linked at Asn16. The Extracellular segment spans residues 21 to 240; that stretch reads ASDDVLRLPQ…EFVHCAEEIE (220 aa). Cys34 and Cys44 are joined by a disulfide. N-linked (GlcNAc...) asparagine glycosylation is present at Asn53. A disulfide bond links Cys75 and Cys86. A glycan (N-linked (GlcNAc...) asparagine) is linked at Asn89. Cysteines 100 and 114 form a disulfide. Positions 125 to 228 constitute a Fibronectin type-III domain; it reads PPVHLNWTLL…EILYVSFSQA (104 aa). Asn130, Asn135, and Asn174 each carry an N-linked (GlcNAc...) asparagine glycan. The short motif at 214–218 is the WSXWS motif element; it reads FGEFS. The helical transmembrane segment at 241-264 threads the bilayer; it reads FPWFLVVIFGACGLAVTVILILLS. At 265–611 the chain is on the cytoplasmic side; the sequence is KQSRLKMLIF…STDQLNKIMP (347 aa). The segment at 270-355 is required for JAK2 binding; that stretch reads KMLIFPPVPV…HLKSHSCLGA (86 aa). The short motif at 273 to 281 is the Box 1 motif element; it reads IFPPVPVPK. Positions 316-325 match the UbE motif motif; that stretch reads DLWVEFIELD. The disordered stretch occupies residues 411 to 455; the sequence is SLPSLANTDTQQPRMSTRPENSQPWPPFADSIDAASPSAHNQLSN. Polar residues predominate over residues 414 to 433; that stretch reads SLANTDTQQPRMSTRPENSQ.

The protein belongs to the type I cytokine receptor family. Type 1 subfamily. The soluble form (GHBP) is produced by phorbol ester-promoted proteolytic cleavage at the cell surface (shedding) by ADAM17/TACE.

It localises to the cell membrane. The protein localises to the secreted. Its function is as follows. Receptor for pituitary gland growth hormone (GH1) involved in regulating postnatal body growth. On ligand binding, couples to the JAK2/STAT5 pathway. The soluble form (GHBP) acts as a reservoir of growth hormone in plasma and may be a modulator/inhibitor of GH signaling. The protein is Growth hormone receptor (GHR) of Columba livia (Rock dove).